Consider the following 160-residue polypeptide: Cytochrome b6-f complex subunit 4 (160 aa).

The next 3 helical transmembrane spans lie at 36–56, 95–115, and 131–151; these read LLYI…GLAV, LLGV…PFPE, and TVFS…ALPI.

This sequence belongs to the cytochrome b family. PetD subfamily. As to quaternary structure, the 4 large subunits of the cytochrome b6-f complex are cytochrome b6, subunit IV (17 kDa polypeptide, petD), cytochrome f and the Rieske protein, while the 4 small subunits are petG, petL, petM and petN. The complex functions as a dimer.

The protein resides in the plastid. It localises to the chloroplast thylakoid membrane. In terms of biological role, component of the cytochrome b6-f complex, which mediates electron transfer between photosystem II (PSII) and photosystem I (PSI), cyclic electron flow around PSI, and state transitions. This Huperzia lucidula (Shining clubmoss) protein is Cytochrome b6-f complex subunit 4.